A 374-amino-acid polypeptide reads, in one-letter code: Probable quinol oxidase subunit 2 (374 aa).

A signal peptide spans 1-19 (MSKFKSLLLMFGTLILLSG). Cys-20 carries the N-palmitoyl cysteine lipid modification. Cys-20 is lipidated: S-diacylglycerol cysteine. A run of 2 helical transmembrane segments spans residues 43–63 (SIIFMLVIVAVVLTMFAIFIF) and 82–102 (IETIWFVVPIIIVIALSIPTV). The segment at 321–374 (MKPMILGNNDPYDNEFKKEEDHNSKEMEKISKSAKDENASKFGSKADNDHGGGH) is disordered. The segment covering 334–374 (NEFKKEEDHNSKEMEKISKSAKDENASKFGSKADNDHGGGH) has biased composition (basic and acidic residues).

The protein belongs to the cytochrome c oxidase subunit 2 family.

It localises to the cell membrane. The enzyme catalyses 2 a quinol + O2 = 2 a quinone + 2 H2O. Functionally, catalyzes quinol oxidation with the concomitant reduction of oxygen to water. Subunit II transfers the electrons from a quinol to the binuclear center of the catalytic subunit I. In Staphylococcus haemolyticus (strain JCSC1435), this protein is Probable quinol oxidase subunit 2 (qoxA).